Consider the following 346-residue polypeptide: Methylthioribose-1-phosphate isomerase (346 aa).

Substrate is bound by residues 45-47 (RGA), arginine 87, and glutamine 194. Aspartate 235 (proton donor) is an active-site residue. 245–246 (NK) is a binding site for substrate.

This sequence belongs to the eIF-2B alpha/beta/delta subunits family. MtnA subfamily.

It catalyses the reaction 5-(methylsulfanyl)-alpha-D-ribose 1-phosphate = 5-(methylsulfanyl)-D-ribulose 1-phosphate. It functions in the pathway amino-acid biosynthesis; L-methionine biosynthesis via salvage pathway; L-methionine from S-methyl-5-thio-alpha-D-ribose 1-phosphate: step 1/6. In terms of biological role, catalyzes the interconversion of methylthioribose-1-phosphate (MTR-1-P) into methylthioribulose-1-phosphate (MTRu-1-P). The polypeptide is Methylthioribose-1-phosphate isomerase (Syntrophomonas wolfei subsp. wolfei (strain DSM 2245B / Goettingen)).